We begin with the raw amino-acid sequence, 30 residues long: Kalata-B16 (30 aa).

Positions glycine 1–aspartate 30 form a cross-link, cyclopeptide (Gly-Asp). 3 disulfides stabilise this stretch: cysteine 4/cysteine 21, cysteine 8/cysteine 23, and cysteine 13/cysteine 28.

Post-translationally, this is a cyclic peptide.

Its function is as follows. Probably participates in a plant defense mechanism. This Oldenlandia affinis protein is Kalata-B16.